Here is a 335-residue protein sequence, read N- to C-terminus: Phosphatidylglycerol--prolipoprotein diacylglyceryl transferase (335 aa).

Transmembrane regions (helical) follow at residues 31–51 (IYWY…TYSL), 67–87 (YIFL…LAIG), and 100–120 (LAIQ…FPLI). Residue Arg-163 coordinates a 1,2-diacyl-sn-glycero-3-phospho-(1'-sn-glycerol). 3 helical membrane-spanning segments follow: residues 213–233 (PLFL…YFGL), 235–255 (YIKQ…YGVT), and 277–297 (SLLL…APLL).

The protein belongs to the Lgt family.

The protein resides in the cell membrane. It catalyses the reaction L-cysteinyl-[prolipoprotein] + a 1,2-diacyl-sn-glycero-3-phospho-(1'-sn-glycerol) = an S-1,2-diacyl-sn-glyceryl-L-cysteinyl-[prolipoprotein] + sn-glycerol 1-phosphate + H(+). It functions in the pathway protein modification; lipoprotein biosynthesis (diacylglyceryl transfer). Its function is as follows. Catalyzes the transfer of the diacylglyceryl group from phosphatidylglycerol to the sulfhydryl group of the N-terminal cysteine of a prolipoprotein, the first step in the formation of mature lipoproteins. The chain is Phosphatidylglycerol--prolipoprotein diacylglyceryl transferase from Ureaplasma parvum serovar 3 (strain ATCC 27815 / 27 / NCTC 11736).